Consider the following 341-residue polypeptide: UDP-glucose 4-epimerase (341 aa).

It belongs to the polysaccharide synthase family.

The enzyme catalyses UDP-alpha-D-glucose = UDP-alpha-D-galactose. Its function is as follows. Epimerizes UDP-galactose to UDP-glucose. In Rickettsia typhi (strain ATCC VR-144 / Wilmington), this protein is UDP-glucose 4-epimerase (capD).